Consider the following 558-residue polypeptide: Adenine deaminase (558 aa).

It belongs to the metallo-dependent hydrolases superfamily. Adenine deaminase family. Mn(2+) serves as cofactor.

It catalyses the reaction adenine + H2O + H(+) = hypoxanthine + NH4(+). The sequence is that of Adenine deaminase from Deinococcus deserti (strain DSM 17065 / CIP 109153 / LMG 22923 / VCD115).